The primary structure comprises 188 residues: Elongation factor P (188 aa).

This sequence belongs to the elongation factor P family.

It is found in the cytoplasm. Its pathway is protein biosynthesis; polypeptide chain elongation. Its function is as follows. Involved in peptide bond synthesis. Stimulates efficient translation and peptide-bond synthesis on native or reconstituted 70S ribosomes in vitro. Probably functions indirectly by altering the affinity of the ribosome for aminoacyl-tRNA, thus increasing their reactivity as acceptors for peptidyl transferase. The polypeptide is Elongation factor P (Cellvibrio japonicus (strain Ueda107) (Pseudomonas fluorescens subsp. cellulosa)).